Consider the following 95-residue polypeptide: Defensin-like protein 247 (95 aa).

The N-terminal stretch at 1-24 (MKFAAIFLVTCVFFSLFSSNLSQG) is a signal peptide. 4 cysteine pairs are disulfide-bonded: Cys37-Cys94, Cys48-Cys77, Cys56-Cys87, and Cys75-Cys89.

This sequence belongs to the DEFL family.

It is found in the secreted. In Arabidopsis thaliana (Mouse-ear cress), this protein is Defensin-like protein 247 (SCRL6).